A 386-amino-acid polypeptide reads, in one-letter code: Diels-Alderase phm7 (386 aa).

Positions 1–223 are beta-sandwich motif; it reads MSEPTSSSSL…MVRGWSARPW (223 aa). Glu51, Asn84, and Lys356 together coordinate substrate. Positions 223 to 386 are beta-barrel motif; that stretch reads WPTFMNDAYY…FGGQLQIPVP (164 aa).

This sequence belongs to the Diels-Alderase family.

It functions in the pathway secondary metabolite biosynthesis. With respect to regulation, 3-aminomethyl-p-menthane which is similar to the phomasetin substructure, dose-dependently inhibits phm7 activity in vitro and production of phomasetin in the fungus. Its function is as follows. Diels-Alderase; part of the gene cluster that mediates the biosynthesis of the trans-fused decalin-containing tetramic acid phomasetin, the stereochemical opposite of the HIV-1 integrase inhibitor equisetin. The PKS module of phm1 together with the enoylreductase phm4 catalyze the formation of the polyketide unit which is then conjugated to L-serine by the condensation domain of the phm1 NRPS module. Activity of the Dieckmann cyclase domain (RED) of phm1 results in release of the Dieckmann product intermediate. The Diels-Alderase phm7 then uses the Dieckmann product of phm1 as substrate and catalyzes the Diels-Alder cycloaddition to form the decalin ring of N-desmethylphomasetin. N-desmethylphomasetin is further methylated to phomasetin by the methyltransferase phm5. This Pyrenochaetopsis sp protein is Diels-Alderase phm7.